Here is a 466-residue protein sequence, read N- to C-terminus: Citrate synthase, mitochondrial (466 aa).

The N-terminal 27 residues, 1-27 (MALLTAAARLLGTKNASCLVLAARHAS), are a transit peptide targeting the mitochondrion. The SIFI-degron signature appears at 2-21 (ALLTAAARLLGTKNASCLVL). Lysine 57 bears the N6-succinyllysine mark. An N6-acetyllysine; alternate modification is found at lysine 76. Residue lysine 76 is modified to N6-succinyllysine; alternate. 2 positions are modified to N6-succinyllysine: lysine 103 and lysine 193. Histidine 301 is a catalytic residue. 2 positions are modified to N6-acetyllysine; alternate: lysine 321 and lysine 327. N6-succinyllysine; alternate is present on residues lysine 321 and lysine 327. Residue histidine 347 is part of the active site. An oxaloacetate-binding site is contributed by arginine 356. At lysine 375 the chain carries N6-acetyllysine; alternate. Lysine 375 is subject to N6-succinyllysine; alternate. Residue lysine 382 is modified to N6-acetyllysine. Lysine 393 is subject to N6-acetyllysine; alternate. Lysine 393 carries the N6-succinyllysine; alternate modification. Lysine 395 bears the N6,N6,N6-trimethyllysine mark. The active site involves aspartate 402. The oxaloacetate site is built by arginine 428 and arginine 448. Lysine 450 is subject to N6-succinyllysine. Residue lysine 459 is modified to N6-acetyllysine; alternate. Lysine 459 bears the N6-succinyllysine; alternate mark.

The protein belongs to the citrate synthase family. In terms of assembly, homodimer. Methylated. Trimethylation at Lys-395 by CSKMT decreases citrate synthase activity. In terms of processing, in response to mitochondrial stress, the precursor protein is ubiquitinated by the SIFI complex in the cytoplasm before mitochondrial import, leading to its degradation. Within the SIFI complex, UBR4 initiates ubiquitin chain that are further elongated or branched by KCMF1.

The protein localises to the mitochondrion matrix. It carries out the reaction oxaloacetate + acetyl-CoA + H2O = citrate + CoA + H(+). The protein operates within carbohydrate metabolism; tricarboxylic acid cycle; isocitrate from oxaloacetate: step 1/2. In terms of biological role, key enzyme of the Krebs tricarboxylic acid cycle which catalyzes the synthesis of citrate from acetyl coenzyme A and oxaloacetate. The sequence is that of Citrate synthase, mitochondrial (CS) from Macaca fascicularis (Crab-eating macaque).